The following is a 340-amino-acid chain: Ketol-acid reductoisomerase (NADP(+)) (340 aa).

The 183-residue stretch at 1 to 183 folds into the KARI N-terminal Rossmann domain; the sequence is MAITVYYDKD…GGGRTGIIET (183 aa). NADP(+)-binding positions include 26-29, arginine 49, serine 52, serine 54, and 84-87; these read FGSQ and DEIQ. The active site involves histidine 109. Glycine 135 lines the NADP(+) pocket. The KARI C-terminal knotted domain occupies 184 to 329; it reads TFKAETETDL…RNLRAMMPWI (146 aa). Residues aspartate 192, glutamate 196, glutamate 228, and glutamate 232 each contribute to the Mg(2+) site. Position 253 (serine 253) interacts with substrate.

The protein belongs to the ketol-acid reductoisomerase family. The cofactor is Mg(2+).

The enzyme catalyses (2R)-2,3-dihydroxy-3-methylbutanoate + NADP(+) = (2S)-2-acetolactate + NADPH + H(+). It catalyses the reaction (2R,3R)-2,3-dihydroxy-3-methylpentanoate + NADP(+) = (S)-2-ethyl-2-hydroxy-3-oxobutanoate + NADPH + H(+). It participates in amino-acid biosynthesis; L-isoleucine biosynthesis; L-isoleucine from 2-oxobutanoate: step 2/4. It functions in the pathway amino-acid biosynthesis; L-valine biosynthesis; L-valine from pyruvate: step 2/4. In terms of biological role, involved in the biosynthesis of branched-chain amino acids (BCAA). Catalyzes an alkyl-migration followed by a ketol-acid reduction of (S)-2-acetolactate (S2AL) to yield (R)-2,3-dihydroxy-isovalerate. In the isomerase reaction, S2AL is rearranged via a Mg-dependent methyl migration to produce 3-hydroxy-3-methyl-2-ketobutyrate (HMKB). In the reductase reaction, this 2-ketoacid undergoes a metal-dependent reduction by NADPH to yield (R)-2,3-dihydroxy-isovalerate. The sequence is that of Ketol-acid reductoisomerase (NADP(+)) from Campylobacter jejuni subsp. doylei (strain ATCC BAA-1458 / RM4099 / 269.97).